We begin with the raw amino-acid sequence, 542 residues long: 4-coumarate--CoA ligase-like 5 (542 aa).

6 residues coordinate ATP: S204, S205, G206, T207, T208, and K212. F262 is a (E)-4-coumaroyl-AMP binding site. Position 282 (R282) interacts with CoA. The tract at residues 284 to 353 is SBD1; sequence DFIAALRAIE…SVFPNVELVQ (70 aa). G331, Q353, G354, and T358 together coordinate (E)-4-coumaroyl-AMP. Residues Q353, G354, T358, D418, and R433 each contribute to the ATP site. Residues 354–397 form an SBD2 region; that stretch reads GYGLTESSGAVAATVGPEESKAYGSVGKLGSHLQAKIVDPSTGY. Positions 435 and 439 each coordinate (E)-4-coumaroyl-AMP. CoA-binding residues include K441 and G442. K524 provides a ligand contact to ATP.

Belongs to the ATP-dependent AMP-binding enzyme family. Requires Mg(2+) as cofactor.

It catalyses the reaction (E)-4-coumarate + ATP + CoA = (E)-4-coumaroyl-CoA + AMP + diphosphate. The enzyme catalyses (E)-4-coumarate + ATP + H(+) = (E)-4-coumaroyl-AMP + diphosphate. The catalysed reaction is (E)-4-coumaroyl-AMP + CoA = (E)-4-coumaroyl-CoA + AMP + H(+). Functionally, carboxylate--CoA ligase that may use 4-coumarate as substrate. Follows a two-step reaction mechanism, wherein the carboxylate substrate first undergoes adenylation by ATP, followed by a thioesterification in the presence of CoA to yield the final CoA thioester. This is 4-coumarate--CoA ligase-like 5 (4CLL5) from Oryza sativa subsp. japonica (Rice).